The primary structure comprises 602 residues: Protein nessun dorma (602 aa).

Positions 188-208 (AEAKYIQQRLDYLELDLSDAE) form a coiled coil.

Interacts (via N-terminus) with both members of the centralspindlin complex, Pav and Tum. In terms of tissue distribution, detected in testis (at protein level). Also expressed in ovary.

Its subcellular location is the midbody. Its function is as follows. Required during male meiosis for completion of spermatocyte cytokinesis and possibly also required in female germline cells. Also involved in ring canal formation in male and female germline cells. Not essential for cleavage furrow ingression but is required for contractile ring stability and the attachment of the furrowing membrane to the actomyosin ring in late telophase. Displays high binding affinity for beta-galactosides. In Drosophila melanogaster (Fruit fly), this protein is Protein nessun dorma.